The following is a 139-amino-acid chain: Putative pre-16S rRNA nuclease (139 aa).

It belongs to the YqgF nuclease family.

The protein resides in the cytoplasm. Its function is as follows. Could be a nuclease involved in processing of the 5'-end of pre-16S rRNA. The chain is Putative pre-16S rRNA nuclease from Photorhabdus laumondii subsp. laumondii (strain DSM 15139 / CIP 105565 / TT01) (Photorhabdus luminescens subsp. laumondii).